A 121-amino-acid polypeptide reads, in one-letter code: uncharacterized protein (121 aa).

A helical membrane pass occupies residues 65–84 (TILFYTPTLICFLFLQNFLY).

It localises to the membrane. This is an uncharacterized protein from Saccharomyces cerevisiae (strain ATCC 204508 / S288c) (Baker's yeast).